We begin with the raw amino-acid sequence, 319 residues long: Acetyl-coenzyme A carboxylase carboxyl transferase subunit alpha (319 aa).

Residues 32–293 (NVETEVRALR…KAVLLNELDA (262 aa)) form the CoA carboxyltransferase C-terminal domain.

This sequence belongs to the AccA family. Acetyl-CoA carboxylase is a heterohexamer composed of biotin carboxyl carrier protein (AccB), biotin carboxylase (AccC) and two subunits each of ACCase subunit alpha (AccA) and ACCase subunit beta (AccD).

The protein localises to the cytoplasm. The enzyme catalyses N(6)-carboxybiotinyl-L-lysyl-[protein] + acetyl-CoA = N(6)-biotinyl-L-lysyl-[protein] + malonyl-CoA. It participates in lipid metabolism; malonyl-CoA biosynthesis; malonyl-CoA from acetyl-CoA: step 1/1. Functionally, component of the acetyl coenzyme A carboxylase (ACC) complex. First, biotin carboxylase catalyzes the carboxylation of biotin on its carrier protein (BCCP) and then the CO(2) group is transferred by the carboxyltransferase to acetyl-CoA to form malonyl-CoA. The chain is Acetyl-coenzyme A carboxylase carboxyl transferase subunit alpha from Xanthomonas axonopodis pv. citri (strain 306).